The sequence spans 136 residues: Small cardioactive peptides (136 aa).

A signal peptide spans 1–24 (METSVSRVTVSLTLLVLIICSADA). Methionine amide is present on residues methionine 33 and methionine 46. Positions 49–135 (SQMKTETGTD…VLSKLKSLLQ (87 aa)) are cleaved as a propeptide — carboxy-terminal peptide.

Belongs to the SCP family. Post-translationally, contains three disulfide bonds. In terms of tissue distribution, highly expressed in the buccal ganglion.

The protein localises to the secreted. Functionally, involved in the stimulation of contractile activity in the gut, the increase of the amplitude of the heart beat, and enhancement of the contractile response of the radula closer muscle. The polypeptide is Small cardioactive peptides (Aplysia californica (California sea hare)).